The chain runs to 272 residues: R3H domain-containing protein 4 (272 aa).

Residues 141 to 167 are disordered; that stretch reads LEDEGKSKARRRGPTRGEDRRREDPAY. Residues 155-165 are compositionally biased toward basic and acidic residues; it reads TRGEDRRREDP. In terms of domain architecture, R3H spans 191-254; sequence METLETWEER…KRQMKVSNRH (64 aa).

It localises to the nucleus. This is R3H domain-containing protein 4 (R3HDM4) from Bos taurus (Bovine).